Here is a 440-residue protein sequence, read N- to C-terminus: MTIQSNEFNVAIVGAGVAGLALAMALHRKGVLFTIYEEAKEYSVVGAGIGFGPNGMQALDLIEPGFRPLYEGLCVGNKSADAQWVFFEGYLLEPGLGDNKPWAGNLKSAWGNQDYVRKSAHRKELLDIMTSFIPIESVKFNKKLVSIKEYTDRVMLEFADGEIVAHSILAGSDGIASTVREYLLRPTHPEEALPVYSGAHCYRAVIPMDEAYEIMGEKTDVAKIYFGHNRGAVSYRITGGKELNFLLIKATPNEQWPYPGRVTKQITQEEMLADFDGDNIDDRFRRLVAKAKPVKWGLFHHAKTSTYYKDRVCILGDSAHASMPFQAAGAAQGVEDALVLAYILEELMKSPTRGSEQLEEINAGLAAYDAIRRPRAQKQLDRAFEVGTMIYFQHPECGDDMTKILHKLQNGWLDWLWFPDLKADVETALSQMRNDVQKKA.

A helical transmembrane segment spans residues 7 to 26; it reads EFNVAIVGAGVAGLALAMAL. Residues Glu37 and Gly50 each coordinate FAD. A glycan (N-linked (GlcNAc...) asparagine) is linked at Asn77. Arg122 contacts FAD. Catalysis depends on residues Arg203 and Tyr235. FAD is bound by residues Asp317 and Ala330.

This sequence belongs to the paxM FAD-dependent monooxygenase family. Requires FAD as cofactor.

Its subcellular location is the membrane. Its function is as follows. FAD-dependent monooxygenase; part of the Fusarium detoxification of benzoxazolinone cluster 1 (FDB1) involved in the degradation of benzoxazolinones produced by the host plant. Maize, wheat, and rye produce the 2 benzoxazinone phytoanticipins 2,4-dihy-droxy-7-methoxy-1,4-benzoxazin-3-one (DIMBOA) and 2,4-dihydroxy-1,4-benzoxazin-3-one (DIBOA) that, due to their inherent instability once released, spontaneously degrade to the more stable corresponding benzoxazolinones, 6-methoxy-2-benzoxazolinone (MBOA) and 2-benzoxazolinone (BOA), respectively. The first step in the detoxification of benzoxazolinones involves the hydrolysis of the cyclic ester bond of benzoxazolinones by the FDB1 cluster gamma-lactamase MBL1 to aminophenols. MBL1 is able to convert BOA into 2-aminophenol (2-AP), as well as MBOA into 5-methoxy-2-aminophenol (2-AMP). The FDB2 cluster N-malonyltransferase FDB2/NAT1 then metabolizes aminophenols via N-malonylation to non-toxic malonamic acids. FDB2/NAT1 converts 2-AP into N-(2-hydroxyphenyl) malonamic acid (HPMA) and 2-AMP into N-(2-hydroxy-4-methoxyphenyl) malonamic acid (HMPMA). The duplicated dienlactone hydrolases DLH1 and DLH2 may provide redundant function for hydrolyzing the lactone moiety in the BOA molecule. The roles of the amidases an other enzymes encoded by the 2 FDB clusters have not been identified so far. This Gibberella moniliformis (strain M3125 / FGSC 7600) (Maize ear and stalk rot fungus) protein is FAD-dependent monooxygenase FVEG_08293.